We begin with the raw amino-acid sequence, 355 residues long: 3-dehydroquinate synthase (355 aa).

NAD(+)-binding positions include 105–109, 129–130, Lys-142, Lys-151, and 169–172; these read GVVGD, TS, and TLKT. Residues Glu-184, His-246, and His-263 each contribute to the Zn(2+) site.

The protein belongs to the sugar phosphate cyclases superfamily. Dehydroquinate synthase family. It depends on Co(2+) as a cofactor. Zn(2+) is required as a cofactor. NAD(+) serves as cofactor.

It is found in the cytoplasm. It catalyses the reaction 7-phospho-2-dehydro-3-deoxy-D-arabino-heptonate = 3-dehydroquinate + phosphate. The protein operates within metabolic intermediate biosynthesis; chorismate biosynthesis; chorismate from D-erythrose 4-phosphate and phosphoenolpyruvate: step 2/7. Functionally, catalyzes the conversion of 3-deoxy-D-arabino-heptulosonate 7-phosphate (DAHP) to dehydroquinate (DHQ). This chain is 3-dehydroquinate synthase, found in Streptococcus agalactiae serotype Ia (strain ATCC 27591 / A909 / CDC SS700).